Reading from the N-terminus, the 165-residue chain is uncharacterized protein (165 aa).

A helical membrane pass occupies residues 4-26 (FVIGTMIALAGLLVGGGVGSYFT).

The protein localises to the membrane. This is an uncharacterized protein from Aquifex aeolicus (strain VF5).